The chain runs to 504 residues: Maturase K (504 aa).

The protein belongs to the intron maturase 2 family. MatK subfamily.

It is found in the plastid. It localises to the chloroplast. In terms of biological role, usually encoded in the trnK tRNA gene intron. Probably assists in splicing its own and other chloroplast group II introns. The protein is Maturase K of Adenostoma fasciculatum (Chamise).